The sequence spans 174 residues: Gamma-crystallin C (174 aa).

Beta/gamma crystallin 'Greek key' domains lie at Gly2–Ser40 and Gly41–Pro83. S-methylcysteine is present on Cys23. The segment at His84–Ser87 is connecting peptide. Beta/gamma crystallin 'Greek key' domains follow at residues His88–Glu128 and Gly129–Val171.

It belongs to the beta/gamma-crystallin family.

Functionally, crystallins are the dominant structural components of the vertebrate eye lens. The protein is Gamma-crystallin C (Crygc) of Mus musculus (Mouse).